The sequence spans 326 residues: Beta-ketoacyl-[acyl-carrier-protein] synthase III (326 aa).

Residues cysteine 120 and histidine 253 contribute to the active site. The interval glutamine 254–arginine 258 is ACP-binding. Asparagine 283 is an active-site residue.

This sequence belongs to the thiolase-like superfamily. FabH family. In terms of assembly, homodimer.

It localises to the cytoplasm. The catalysed reaction is malonyl-[ACP] + acetyl-CoA + H(+) = 3-oxobutanoyl-[ACP] + CO2 + CoA. The protein operates within lipid metabolism; fatty acid biosynthesis. Functionally, catalyzes the condensation reaction of fatty acid synthesis by the addition to an acyl acceptor of two carbons from malonyl-ACP. Catalyzes the first condensation reaction which initiates fatty acid synthesis and may therefore play a role in governing the total rate of fatty acid production. Possesses both acetoacetyl-ACP synthase and acetyl transacylase activities. Its substrate specificity determines the biosynthesis of branched-chain and/or straight-chain of fatty acids. This Cupriavidus taiwanensis (strain DSM 17343 / BCRC 17206 / CCUG 44338 / CIP 107171 / LMG 19424 / R1) (Ralstonia taiwanensis (strain LMG 19424)) protein is Beta-ketoacyl-[acyl-carrier-protein] synthase III.